A 94-amino-acid chain; its full sequence is Pyrimidine/purine nucleoside phosphorylase (94 aa).

The protein belongs to the nucleoside phosphorylase PpnP family.

It catalyses the reaction a purine D-ribonucleoside + phosphate = a purine nucleobase + alpha-D-ribose 1-phosphate. The catalysed reaction is adenosine + phosphate = alpha-D-ribose 1-phosphate + adenine. The enzyme catalyses cytidine + phosphate = cytosine + alpha-D-ribose 1-phosphate. It carries out the reaction guanosine + phosphate = alpha-D-ribose 1-phosphate + guanine. It catalyses the reaction inosine + phosphate = alpha-D-ribose 1-phosphate + hypoxanthine. The catalysed reaction is thymidine + phosphate = 2-deoxy-alpha-D-ribose 1-phosphate + thymine. The enzyme catalyses uridine + phosphate = alpha-D-ribose 1-phosphate + uracil. It carries out the reaction xanthosine + phosphate = alpha-D-ribose 1-phosphate + xanthine. Catalyzes the phosphorolysis of diverse nucleosides, yielding D-ribose 1-phosphate and the respective free bases. Can use uridine, adenosine, guanosine, cytidine, thymidine, inosine and xanthosine as substrates. Also catalyzes the reverse reactions. This is Pyrimidine/purine nucleoside phosphorylase from Pseudomonas putida (strain GB-1).